We begin with the raw amino-acid sequence, 503 residues long: Poxin-Schlafen (503 aa).

Residue H15 is the Proton donor of the active site. The active-site Shared with catalytic histidine of dimeric partner is Y136. Residue K140 is the Proton acceptor; shared with catalytic histidine of dimeric partner of the active site.

This sequence in the N-terminal section; belongs to the poxin family. In the C-terminal section; belongs to the Schlafen protein family. Subgroup poxviridae B3 subfamily. In terms of assembly, homodimer.

The enzyme catalyses 2',3'-cGAMP + H2O = Gp(2'-5')Ap(3') + H(+). Nuclease that is responsible for viral evasion of host cGAS-STING innate immunity. Cleaves 2',3'-cGAMP which is produced by host cGAS following recognition of cytosolic DNA and blocks the subsequent 2',3'-cGAMP-mediated activation of TMEM173/STING, which normally spreads to adjacent cells and activates the interferon and NF-kappa-B immune responses. This is Poxin-Schlafen (OPG188) from Cynomys gunnisoni (Gunnison's prairie dog).